A 69-amino-acid polypeptide reads, in one-letter code: ATP synthase F(0) complex subunit e, mitochondrial (69 aa).

An N6-acetyllysine modification is found at Lys34. Residue Ser66 is modified to Phosphoserine.

Belongs to the ATPase e subunit family. In terms of assembly, component of the ATP synthase complex composed at least of ATP5F1A/subunit alpha, ATP5F1B/subunit beta, ATP5MC1/subunit c (homooctomer), MT-ATP6/subunit a, MT-ATP8/subunit 8, ATP5ME/subunit e, ATP5MF/subunit f, ATP5MG/subunit g, ATP5MK/subunit k, ATP5MJ/subunit j, ATP5F1C/subunit gamma, ATP5F1D/subunit delta, ATP5F1E/subunit epsilon, ATP5PF/subunit F6, ATP5PB/subunit b, ATP5PD/subunit d, ATP5PO/subunit OSCP. ATP synthase complex consists of a soluble F(1) head domain (subunits alpha(3) and beta(3)) - the catalytic core - and a membrane F(0) domain - the membrane proton channel (subunits c, a, 8, e, f, g, k and j). These two domains are linked by a central stalk (subunits gamma, delta, and epsilon) rotating inside the F1 region and a stationary peripheral stalk (subunits F6, b, d, and OSCP).

The protein localises to the mitochondrion. Its subcellular location is the mitochondrion inner membrane. Subunit e, of the mitochondrial membrane ATP synthase complex (F(1)F(0) ATP synthase or Complex V) that produces ATP from ADP in the presence of a proton gradient across the membrane which is generated by electron transport complexes of the respiratory chain. ATP synthase complex consist of a soluble F(1) head domain - the catalytic core - and a membrane F(1) domain - the membrane proton channel. These two domains are linked by a central stalk rotating inside the F(1) region and a stationary peripheral stalk. During catalysis, ATP synthesis in the catalytic domain of F(1) is coupled via a rotary mechanism of the central stalk subunits to proton translocation. In vivo, can only synthesize ATP although its ATP hydrolase activity can be activated artificially in vitro. Part of the complex F(0) domain. This chain is ATP synthase F(0) complex subunit e, mitochondrial, found in Homo sapiens (Human).